We begin with the raw amino-acid sequence, 125 residues long: Fluoride-specific ion channel FluC (125 aa).

4 consecutive transmembrane segments (helical) span residues 4-24, 36-56, 68-88, and 100-120; these read PLLA…LLAV, GTLL…AWFA, LITT…LEVV, and VISV…GFWL. Na(+) is bound by residues Gly-75 and Thr-78.

This sequence belongs to the fluoride channel Fluc/FEX (TC 1.A.43) family.

The protein resides in the cell inner membrane. It carries out the reaction fluoride(in) = fluoride(out). With respect to regulation, na(+) is not transported, but it plays an essential structural role and its presence is essential for fluoride channel function. Functionally, fluoride-specific ion channel. Important for reducing fluoride concentration in the cell, thus reducing its toxicity. The sequence is that of Fluoride-specific ion channel FluC from Erwinia tasmaniensis (strain DSM 17950 / CFBP 7177 / CIP 109463 / NCPPB 4357 / Et1/99).